A 140-amino-acid chain; its full sequence is Large ribosomal subunit protein uL22 (140 aa).

The tract at residues 115-140 (AKPAAAKKDPKAAAAKADANAGTKEG) is disordered.

It belongs to the universal ribosomal protein uL22 family. Part of the 50S ribosomal subunit.

Its function is as follows. This protein binds specifically to 23S rRNA; its binding is stimulated by other ribosomal proteins, e.g. L4, L17, and L20. It is important during the early stages of 50S assembly. It makes multiple contacts with different domains of the 23S rRNA in the assembled 50S subunit and ribosome. Functionally, the globular domain of the protein is located near the polypeptide exit tunnel on the outside of the subunit, while an extended beta-hairpin is found that lines the wall of the exit tunnel in the center of the 70S ribosome. This Heliobacterium modesticaldum (strain ATCC 51547 / Ice1) protein is Large ribosomal subunit protein uL22.